The sequence spans 502 residues: Glycerol kinase (502 aa).

Residue Thr14 coordinates ADP. The ATP site is built by Thr14 and Thr15. Sn-glycerol 3-phosphate is bound at residue Thr14. Arg18 is an ADP binding site. Sn-glycerol 3-phosphate is bound by residues Arg84, Glu85, Tyr136, and Asp245. 5 residues coordinate glycerol: Arg84, Glu85, Tyr136, Asp245, and Gln246. The ADP site is built by Thr267 and Gly314. ATP is bound by residues Thr267, Gly314, Gln318, and Gly415. ADP contacts are provided by Gly415 and Asn419.

This sequence belongs to the FGGY kinase family.

The enzyme catalyses glycerol + ATP = sn-glycerol 3-phosphate + ADP + H(+). It participates in polyol metabolism; glycerol degradation via glycerol kinase pathway; sn-glycerol 3-phosphate from glycerol: step 1/1. With respect to regulation, inhibited by fructose 1,6-bisphosphate (FBP). Functionally, key enzyme in the regulation of glycerol uptake and metabolism. Catalyzes the phosphorylation of glycerol to yield sn-glycerol 3-phosphate. In Acaryochloris marina (strain MBIC 11017), this protein is Glycerol kinase.